The chain runs to 388 residues: MSKKEETIFFRIEKENRPESSKKEEDENSTEEMTTLNHASVTLDHSAFAIADKDGFKMYQLNPLHFRMYKDYVIKVGPVRLVKQDGNSRRIIYVSALAGGRFAQNNLMIFDVARNEEYFEITTPSRYGPITNIHVSPNRLVALNPNRMFVWTYPDDIKQIRSEDIRSNPKGISAMSYDPTTAACYLAYPGFKTGSVQIMHLNALTARESKSPIVIEAHLTDIAQVALNCQGTLVATGSTKGTVIRVFDARTKGPLYELRRGTVQAHLQCMAFSPCSSYLAVASDKGTLHMFGIRDAEPQKKKNVLERSRGSSSIVKIQLDRPVMAIGFGKIPETPKNLQSIIAICADATYWRHEFYKDNTGNFTSHFGSYDELIEVANDSSFFRTPVE.

The span at 1 to 25 (MSKKEETIFFRIEKENRPESSKKEE) shows a compositional bias: basic and acidic residues. Positions 1–33 (MSKKEETIFFRIEKENRPESSKKEEDENSTEEM) are disordered. One copy of the WD 1 repeat lies at 217-257 (AHLTDIAQVALNCQGTLVATGSTKGTVIRVFDARTKGPLYE). Positions 258–261 (LRRG) match the LRRG motif motif. One copy of the WD 2 repeat lies at 262–301 (TVQAHLQCMAFSPCSSYLAVASDKGTLHMFGIRDAEPQKK). Positions 265–328 (AHLQCMAFSP…LDRPVMAIGF (64 aa)) are required for atg-2 binding.

Belongs to the WD repeat PROPPIN family. Interacts with atg-2; the interaction is direct. Widely expressed in tissues including pharyngeal, muscle and neuronal tissues.

Its subcellular location is the cytoplasm. It is found in the preautophagosomal structure membrane. Its function is as follows. Component of the epg-6/atg-2 complex, which is involved in the generation of autophagosomes from omegasomes and in the distribution of atg-9 and atg-13 during the autophagy-mediated degradation of protein aggregates. Binds to phosphatidylinositols on preautophagosomes, which are early autophagic structures, to promote autophagosome formation. In particular, binds with high affinity to phosphatidylinositols including phosphatidylinositol 3-phosphate (PtdIns(3)P) and phosphatidylinositol 5-phosphate (PtdIns(5)P), but more weakly to phosphatidylinositol 4-phosphate (PtdIns(4)P) and phosphatidylinositol 3,5-bisphosphate (PtdIns(3,5)P2). Involved in autophagy-mediated degradation of ribosomal RNA and ribosomal proteins in lysosomes, which is essential for maintaining nucleotide homeostasis. The protein is Ectopic P granules protein 6 of Caenorhabditis elegans.